Here is a 199-residue protein sequence, read N- to C-terminus: MQYPLPIAHLIDAYMRLPGVGEKTATRLAFYTMDMPEKDVEDFSKALIQVKNDIHQCPICGNITEKEVCDICSNPNRDQTTIMVVEQPKDLMAFEEMGEYDGLYHVLHGVLSPMDGIGPEEINIKSLITRLQKNDDVKEVILALNSTPEGESTAMYISKLIKPAEIKVTRLAAGLSVGSDIEYANSITLKRAVQGRTAL.

The C4-type zinc-finger motif lies at 57–72; that stretch reads CPICGNITEKEVCDIC. The Toprim domain occupies 80–176; it reads TTIMVVEQPK…KVTRLAAGLS (97 aa).

This sequence belongs to the RecR family.

Its function is as follows. May play a role in DNA repair. It seems to be involved in an RecBC-independent recombinational process of DNA repair. It may act with RecF and RecO. The sequence is that of Recombination protein RecR from Lactobacillus helveticus (strain DPC 4571).